Here is a 276-residue protein sequence, read N- to C-terminus: Large ribosomal subunit protein uL2 (276 aa).

Disordered regions lie at residues 33-55 (LVEA…RHIG) and 221-276 (RGTA…AKKK).

The protein belongs to the universal ribosomal protein uL2 family. Part of the 50S ribosomal subunit. Forms a bridge to the 30S subunit in the 70S ribosome.

Functionally, one of the primary rRNA binding proteins. Required for association of the 30S and 50S subunits to form the 70S ribosome, for tRNA binding and peptide bond formation. It has been suggested to have peptidyltransferase activity; this is somewhat controversial. Makes several contacts with the 16S rRNA in the 70S ribosome. This is Large ribosomal subunit protein uL2 from Psychrobacter sp. (strain PRwf-1).